Here is a 761-residue protein sequence, read N- to C-terminus: Prolyl endopeptidase FAP (761 aa).

The Cytoplasmic segment spans residues 1-4; that stretch reads MKTW. The chain crosses the membrane as a helical; Signal-anchor for type II membrane protein span at residues 5–25; it reads LKTVFGVTTLAALALVVICIV. The Extracellular portion of the chain corresponds to 26–761; the sequence is LRPSRVYKPE…FLKQCFSLSD (736 aa). Residues N49, N92, and N99 are each glycosylated (N-linked (GlcNAc...) asparagine). 2 residues coordinate substrate: E203 and E204. N227 and N314 each carry an N-linked (GlcNAc...) asparagine glycan. Cystine bridges form between C321/C332, C438/C441, and C448/C466. S624 acts as the Charge relay system in catalysis. Residues C643 and C756 are joined by a disulfide bond. N-linked (GlcNAc...) asparagine glycosylation is present at N679. Residues D702 and H734 each act as charge relay system in the active site.

Belongs to the peptidase S9B family. Homodimer; homodimerization is required for activity of both plasma membrane and soluble forms. The monomer is inactive. Heterodimer with DPP4. Interacts with PLAUR; the interaction occurs at the cell surface of invadopodia membranes. Interacts with ITGB1. Interacts with ITGA3. Associates with integrin alpha-3/beta-1; the association occurs in a collagen-dependent manner at the cell surface of invadopodia membranes. N-glycosylated. In terms of processing, the N-terminus may be blocked. In terms of tissue distribution, expressed strongly in uterus, pancreas, submaxillary gland and skin, less in lymph node, ovary, skeletal muscle, adrenal and bone marrow. Expressed in reactive stromal fibroblast in epithelial cancers. Expressed in melanocytes but not melanomas (at protein level). Detected in fibroblasts, in placenta, uterus, embryos from day 7-19 and in newborn mice (P1).

It localises to the cell surface. It is found in the cell membrane. The protein resides in the cell projection. The protein localises to the lamellipodium membrane. Its subcellular location is the invadopodium membrane. It localises to the ruffle membrane. It is found in the membrane. The protein resides in the secreted. It carries out the reaction Hydrolysis of Pro-|-Xaa &gt;&gt; Ala-|-Xaa in oligopeptides.. It catalyses the reaction Release of an N-terminal dipeptide, Xaa-Yaa-|-Zaa-, from a polypeptide, preferentially when Yaa is Pro, provided Zaa is neither Pro nor hydroxyproline.. Gelatinase activity is inhibited by serine-protease inhibitors, such as phenylmethylsulfonyl fluoride (PMSF), 4-(2-aminoethyl)-benzenesulfonyl fluoride hydrochloride (AEBSF), 4-amidino phenylsulfonyl fluoride (APSF) and diisopropyl fluorophosphate (DFP), N-ethylmaleimide (NEM) and phenylmethylsulfonyl fluoride (PMSF). Dipeptidyl peptidase activity is inhibited by 2,2'-azino-bis(3-ethylbenzthiazoline-6-sulfonic acid), diisopropylfluorophosphate (DFP). Prolyl endopeptidase activity is inhibited by the boronic acid peptide Ac-Gly-BoroPro, Ac-Gly-Pro-chloromethyl ketone and Thr-Ser-Gly-chloromethyl ketone. In terms of biological role, cell surface glycoprotein serine protease that participates in extracellular matrix degradation and involved in many cellular processes including tissue remodeling, fibrosis, wound healing, inflammation and tumor growth. Both plasma membrane and soluble forms exhibit post-proline cleaving endopeptidase activity, with a marked preference for Ala/Ser-Gly-Pro-Ser/Asn/Ala consensus sequences, on substrate such as alpha-2-antiplasmin SERPINF2 and SPRY2. Degrade also gelatin, heat-denatured type I collagen, but not native collagen type I and IV, vibronectin, tenascin, laminin, fibronectin, fibrin or casein. Also has dipeptidyl peptidase activity, exhibiting the ability to hydrolyze the prolyl bond two residues from the N-terminus of synthetic dipeptide substrates provided that the penultimate residue is proline, with a preference for Ala-Pro, Ile-Pro, Gly-Pro, Arg-Pro and Pro-Pro. Natural neuropeptide hormones for dipeptidyl peptidase are the neuropeptide Y (NPY), peptide YY (PYY), substance P (TAC1) and brain natriuretic peptide 32 (NPPB). The plasma membrane form, in association with either DPP4, PLAUR or integrins, is involved in the pericellular proteolysis of the extracellular matrix (ECM), and hence promotes cell adhesion, migration and invasion through the ECM. Plays a role in tissue remodeling during development and wound healing. Participates in the cell invasiveness towards the ECM in malignant melanoma cancers. Enhances tumor growth progression by increasing angiogenesis, collagen fiber degradation and apoptosis and by reducing antitumor response of the immune system. Promotes glioma cell invasion through the brain parenchyma by degrading the proteoglycan brevican. Acts as a tumor suppressor in melanocytic cells through regulation of cell proliferation and survival in a serine protease activity-independent manner. The sequence is that of Prolyl endopeptidase FAP from Mus musculus (Mouse).